The chain runs to 149 residues: MQVILLDKIGNLGSLGDQVNVKAGYARNFLIPQGKAVMATKANVEMFETRRAELEANVAKQLAAAEARAEKVNALEVTIASKSGDEGKLFGSIGTRDIAEAATAAGVEIAKSEVRLPEGALRTTGSFEVSIQLHSEVFATLKLEVVAAE.

Belongs to the bacterial ribosomal protein bL9 family.

Binds to the 23S rRNA. The sequence is that of Large ribosomal subunit protein bL9 from Aliivibrio fischeri (strain ATCC 700601 / ES114) (Vibrio fischeri).